The primary structure comprises 267 residues: Orotidine 5'-phosphate decarboxylase (267 aa).

Catalysis depends on K93, which acts as the Proton donor.

The protein belongs to the OMP decarboxylase family. Type 2 subfamily.

The enzyme catalyses orotidine 5'-phosphate + H(+) = UMP + CO2. It participates in pyrimidine metabolism; UMP biosynthesis via de novo pathway; UMP from orotate: step 2/2. This Herpetosiphon aurantiacus (strain ATCC 23779 / DSM 785 / 114-95) protein is Orotidine 5'-phosphate decarboxylase.